The sequence spans 119 residues: Protein Wnt-4 (119 aa).

Residue Ser1 is the site of O-palmitoleoyl serine; by PORCN attachment. Intrachain disulfides connect Cys69–Cys100 and Cys85–Cys95. Asn86 carries an N-linked (GlcNAc...) asparagine glycan.

It belongs to the Wnt family. In terms of processing, palmitoleoylation is required for efficient binding to frizzled receptors. Depalmitoleoylation leads to Wnt signaling pathway inhibition.

Its subcellular location is the secreted. It is found in the extracellular space. The protein localises to the extracellular matrix. Ligand for members of the frizzled family of seven transmembrane receptors. Plays an important role in embryonic development. This chain is Protein Wnt-4 (WNT-4), found in Sceloporus occidentalis (Western fence lizard).